Reading from the N-terminus, the 147-residue chain is 3-dehydroquinate dehydratase (147 aa).

The active-site Proton acceptor is Y25. Substrate is bound by residues N76, H82, and D89. Catalysis depends on H102, which acts as the Proton donor. Substrate contacts are provided by residues I103–S104 and R113.

The protein belongs to the type-II 3-dehydroquinase family. As to quaternary structure, homododecamer.

The catalysed reaction is 3-dehydroquinate = 3-dehydroshikimate + H2O. The protein operates within metabolic intermediate biosynthesis; chorismate biosynthesis; chorismate from D-erythrose 4-phosphate and phosphoenolpyruvate: step 3/7. In terms of biological role, catalyzes a trans-dehydration via an enolate intermediate. The protein is 3-dehydroquinate dehydratase of Mycobacterium tuberculosis (strain ATCC 25177 / H37Ra).